The chain runs to 442 residues: MSVKWEKTGKTTGELTFDISKDEIKLGLDQAFKRIKKNLRVPGFRKGHVSRVIFDQYYGEEALYEDALNIVLPNAYAAAVKEAGINAVGQPQIVPVSMDKDKDWTMKATVTVQPEVELGEYKGIEVPKQNTRVYQKDIDAELDKRREQSAELVLKKGKAENGDTVTIDYKGTIDGKEFDGGSAENYSLELGSGTFIPGFEDQLVGHEAGDDVDVVVTFPKDYGAKDLAGKEAHFATKIHEVKSKQLPELDDEFAKDVDDSVDTLDELKEKIKKDLKDQKEQVANDAIQEAAIEGAVKNATIDEIPDAMIQEDVDTQLNQYLGNMQRQGIDPQTYYKLTNTTEDQLRSQFAKNAAERVKTNLVLEAIVAAEDLKATKEEIDKEIKDLAAEYNMDEKVVRNTLSDDMLGHDITVRKAMDLITDNAKQVAKSKLEAKDSDDKESK.

A PPIase FKBP-type domain is found at 162–247 (GDTVTIDYKG…IHEVKSKQLP (86 aa)).

This sequence belongs to the FKBP-type PPIase family. Tig subfamily.

Its subcellular location is the cytoplasm. It carries out the reaction [protein]-peptidylproline (omega=180) = [protein]-peptidylproline (omega=0). Its function is as follows. Involved in protein export. Acts as a chaperone by maintaining the newly synthesized protein in an open conformation. Functions as a peptidyl-prolyl cis-trans isomerase. The protein is Trigger factor of Lactobacillus acidophilus (strain ATCC 700396 / NCK56 / N2 / NCFM).